A 173-amino-acid polypeptide reads, in one-letter code: MCTNIVYEWLKALQLPQYAESFVDNGYDDLEVCKQIGDPDLDAIGVLAPAHRRRILEAVRRLREQDANAAGLYFTLEPQPAPPGPPADAVPTGRRGEPCGGPAQGTRGDSRGHTTAPRSRELVSYPKLKLKIMIRDKLVRDGIHLSKPPYSRKVPMAGILEYLMNWPKSSQSR.

Residues Met1 to Gln65 form the SAM domain. The interval Thr75–Ser119 is disordered. Residues Gln79–Asp88 show a composition bias toward pro residues.

In terms of assembly, interacts promiscuously (via SAM domain) with EPHA5, EPHA6, EPHA7, EPHA8, EPHB1, EPHB2, EPHB3 and EPHB4 (via SAM domain) (in vitro). In terms of tissue distribution, detected in biliary epithelial cells on bile ducts at the hepatic hilum (at protein level).

It is found in the cytoplasm. In Homo sapiens (Human), this protein is Sterile alpha motif domain-containing protein 5 (SAMD5).